Reading from the N-terminus, the 169-residue chain is Small ribosomal subunit protein uS5 (169 aa).

The S5 DRBM domain occupies 15 to 79; that stretch reads LKDQVVAINR…ESAKKNLVKV (65 aa).

It belongs to the universal ribosomal protein uS5 family. Part of the 30S ribosomal subunit. Contacts proteins S4 and S8.

With S4 and S12 plays an important role in translational accuracy. Its function is as follows. Located at the back of the 30S subunit body where it stabilizes the conformation of the head with respect to the body. This Koribacter versatilis (strain Ellin345) protein is Small ribosomal subunit protein uS5.